We begin with the raw amino-acid sequence, 83 residues long: Putative defensin-like protein 131 (83 aa).

The first 34 residues, 1–34 (MAKNRVLTIFYCTIYYCICFKYVLLGMVVEKTQG), serve as a signal peptide directing secretion. 4 disulfides stabilise this stretch: cysteine 37-cysteine 83, cysteine 46-cysteine 65, cysteine 51-cysteine 77, and cysteine 55-cysteine 79.

This sequence belongs to the DEFL family.

The protein localises to the secreted. This Arabidopsis thaliana (Mouse-ear cress) protein is Putative defensin-like protein 131 (LCR29).